Here is a 437-residue protein sequence, read N- to C-terminus: Acyl-coenzyme A thioesterase 9, mitochondrial (437 aa).

Residues 1 to 21 (MRRAALRLCTLSKGLLAPSRG) constitute a mitochondrion transit peptide. HotDog ACOT-type domains lie at 84 to 207 (SYIE…RDSE) and 287 to 399 (ENSK…EKEV). K101 is modified (N6-acetyllysine).

This sequence belongs to the acyl coenzyme A hydrolase family. In terms of assembly, interacts with NYAP1, NYAP2 and MYO16.

The protein localises to the mitochondrion. The protein resides in the mitochondrion matrix. It is found in the mitochondrion inner membrane. It carries out the reaction butanoyl-CoA + H2O = butanoate + CoA + H(+). It catalyses the reaction propanoyl-CoA + H2O = propanoate + CoA + H(+). The catalysed reaction is hexadecanoyl-CoA + H2O = hexadecanoate + CoA + H(+). The enzyme catalyses octanoyl-CoA + H2O = octanoate + CoA + H(+). It carries out the reaction decanoyl-CoA + H2O = decanoate + CoA + H(+). It catalyses the reaction tetradecanoyl-CoA + H2O = tetradecanoate + CoA + H(+). The catalysed reaction is 4,8-dimethylnonanoyl-CoA + H2O = 4,8-dimethylnonanoate + CoA + H(+). The enzyme catalyses 3-methylbutanoyl-CoA + H2O = 3-methylbutanoate + CoA + H(+). It carries out the reaction 2-methylpropanoyl-CoA + H2O = 2-methylpropanoate + CoA + H(+). Its pathway is lipid metabolism; fatty acid metabolism. With respect to regulation, strongly inhibited by NADH and CoA. Its function is as follows. Mitochondrial acyl-CoA thioesterase. Catalyzes the hydrolysis of acyl-CoAs into free fatty acids and coenzyme A (CoA), regulating their respective intracellular levels. Regulates both mitochondrial lipid and amino acid metabolism. This is Acyl-coenzyme A thioesterase 9, mitochondrial (ACOT9) from Bos taurus (Bovine).